Consider the following 353-residue polypeptide: MSKEFEVPRSVEWEENHINILNQQKLPAETVFEHLYTKEDVYDAIVTLKVRGAPAIGITAAFGLALSAQDIETEDIDVFKQEVIQIKEYLNSARPTAVNLAWALERLLRRIERAASVNAAKTDLVHEAIQIQIEDEETCRQIGQNALQLFKSGDRIMTICNAGSIATSRYGTALAPFYLAKKKNLDLHIYACETRPVLQGARLTTWELMQGGVDVTLITDNMAAHTMKEKQISAVIVGADRIARNGDAANKIGTLSLAILAKHFQIPFFIAAPLSTFDVSTKDGSDIPIEERDPLEVKEFNGVQIAPPDVQVFNPAFDVTPHHLISGIITEKGIITSNYTEEIDALFAENISL.

Residues 51-53, R94, and Q199 each bind substrate; that span reads RGA. D240 (proton donor) is an active-site residue. Residue 250–251 coordinates substrate; sequence NK.

The protein belongs to the eIF-2B alpha/beta/delta subunits family. MtnA subfamily. Homodimer.

It catalyses the reaction 5-(methylsulfanyl)-alpha-D-ribose 1-phosphate = 5-(methylsulfanyl)-D-ribulose 1-phosphate. The protein operates within amino-acid biosynthesis; L-methionine biosynthesis via salvage pathway; L-methionine from S-methyl-5-thio-alpha-D-ribose 1-phosphate: step 1/6. In terms of biological role, catalyzes the interconversion of methylthioribose-1-phosphate (MTR-1-P) into methylthioribulose-1-phosphate (MTRu-1-P). This chain is Methylthioribose-1-phosphate isomerase, found in Bacillus pumilus (strain SAFR-032).